Reading from the N-terminus, the 134-residue chain is Small ribosomal subunit protein bS16 (134 aa).

The tract at residues 105–134 (EAERRQKRLTAKTRRRQAKKAAEAAGSAEG) is disordered. Positions 109–123 (RQKRLTAKTRRRQAK) are enriched in basic residues.

It belongs to the bacterial ribosomal protein bS16 family.

The sequence is that of Small ribosomal subunit protein bS16 from Chlorobaculum parvum (strain DSM 263 / NCIMB 8327) (Chlorobium vibrioforme subsp. thiosulfatophilum).